Reading from the N-terminus, the 251-residue chain is Malonyl-[acyl-carrier protein] O-methyltransferase (251 aa).

The protein belongs to the methyltransferase superfamily.

It carries out the reaction malonyl-[ACP] + S-adenosyl-L-methionine = malonyl-[ACP] methyl ester + S-adenosyl-L-homocysteine. The protein operates within cofactor biosynthesis; biotin biosynthesis. Converts the free carboxyl group of a malonyl-thioester to its methyl ester by transfer of a methyl group from S-adenosyl-L-methionine (SAM). It allows to synthesize pimeloyl-ACP via the fatty acid synthetic pathway. This chain is Malonyl-[acyl-carrier protein] O-methyltransferase, found in Pseudescherichia vulneris (Escherichia vulneris).